The chain runs to 513 residues: Secreted LysM effector Vd6LysM (513 aa).

The first 19 residues, 1–19 (MSFIKSLLLAAAAVASVSA), serve as a signal peptide directing secretion. LysM domains are found at residues 38-85 (SYWV…SYCV), 136-182 (KFHW…NVCV), 219-265 (KFHW…QVCV), and 302-348 (KFHW…QVCV). The span at 357–367 (TTTRPPTTTAP) shows a compositional bias: low complexity. The segment at 357-377 (TTTRPPTTTAPGNGVSTPQPT) is disordered. LysM domains lie at 387–433 (KFHW…NVCV) and 465–511 (KFHW…NVCV).

The protein belongs to the secreted LysM effector family.

Functionally, might have a role in sequestration of chitin oligosaccharides (breakdown products of fungal cell walls that are released during invasion and act as triggers of host immunity) to dampen host defense. Does not play an important role during host colonization. The chain is Secreted LysM effector Vd6LysM from Verticillium dahliae (strain VdLs.17 / ATCC MYA-4575 / FGSC 10137) (Verticillium wilt).